Reading from the N-terminus, the 310-residue chain is tRNA dimethylallyltransferase (310 aa).

13–20 (GPTASGKT) contributes to the ATP binding site. 15–20 (TASGKT) contributes to the substrate binding site. Interaction with substrate tRNA regions lie at residues 38 to 41 (DSAL), 162 to 166 (QRLSR), 243 to 248 (RCVGYR), and 276 to 283 (KRQITWLR).

It belongs to the IPP transferase family. In terms of assembly, monomer. Mg(2+) serves as cofactor.

It catalyses the reaction adenosine(37) in tRNA + dimethylallyl diphosphate = N(6)-dimethylallyladenosine(37) in tRNA + diphosphate. Functionally, catalyzes the transfer of a dimethylallyl group onto the adenine at position 37 in tRNAs that read codons beginning with uridine, leading to the formation of N6-(dimethylallyl)adenosine (i(6)A). This Vibrio atlanticus (strain LGP32) (Vibrio splendidus (strain Mel32)) protein is tRNA dimethylallyltransferase.